A 311-amino-acid polypeptide reads, in one-letter code: Probable manganese-dependent inorganic pyrophosphatase (311 aa).

Mn(2+) is bound by residues H9, D13, D15, D77, H99, and D151.

This sequence belongs to the PPase class C family. Homodimer. Mn(2+) serves as cofactor.

It is found in the cytoplasm. The catalysed reaction is diphosphate + H2O = 2 phosphate + H(+). This is Probable manganese-dependent inorganic pyrophosphatase (ppaC) from Streptococcus gordonii (strain Challis / ATCC 35105 / BCRC 15272 / CH1 / DL1 / V288).